Consider the following 85-residue polypeptide: Progonadoliberin-2 (85 aa).

An N-terminal signal peptide occupies residues 1–23; sequence MCVSRLVLLFGLLLCVGAQLSNA. At Gln-24 the chain carries Pyrrolidone carboxylic acid. Gly-33 carries the glycine amide modification.

This sequence belongs to the GnRH family.

It is found in the secreted. Its function is as follows. Stimulates the secretion of gonadotropins. The chain is Progonadoliberin-2 (gnrh2) from Morone saxatilis (Striped bass).